The chain runs to 126 residues: Small ribosomal subunit protein uS11 (126 aa).

Belongs to the universal ribosomal protein uS11 family. As to quaternary structure, part of the 30S ribosomal subunit. Interacts with proteins S7 and S18. Binds to IF-3.

In terms of biological role, located on the platform of the 30S subunit, it bridges several disparate RNA helices of the 16S rRNA. Forms part of the Shine-Dalgarno cleft in the 70S ribosome. This is Small ribosomal subunit protein uS11 from Treponema pallidum (strain Nichols).